We begin with the raw amino-acid sequence, 436 residues long: MGLARALRRLSGALDSGDSRAGDEEEAGPGLCRNGWAPAPVQSPVGRRRGRFVKKDGHCNVRFVNLGGQGARYLSDLFTTCVDVRWRWMCLLFSCSFLASWLLFGLAFWLIASLHGDLAAPPPPAPCFSHVASFLAAFLFALETQTSIGYGVRSVTEECPAAVAAVVLQCIAGCVLDAFVVGAVMAKMAKPKKRNETLVFSENAVVALRDHRLCLMWRVGNLRRSHLVEAHVRAQLLQPRVTPEGEYIPLDHQDVDVGFDGGTDRIFLVSPITIVHEIDSASPLYELGRAELARADFELVVILEGMVEATAMTTQCRSSYLPGELLWGHRFEPVLFQRGSQYEVDYRHFHRTYEVPGTPVCSAKELDERAEQASHSLKSSFPGSLTAFCYENELALSCCQEEDEDDETEEGNGVETEDGAASPRVLTPTLALTLPP.

At 1–83 the chain is on the cytoplasmic side; sequence MGLARALRRL…LSDLFTTCVD (83 aa). Residues 14-43 form a disordered region; sequence LDSGDSRAGDEEEAGPGLCRNGWAPAPVQS. Position 81 is an S-nitrosocysteine (Cys-81). The chain crosses the membrane as a helical span at residues 84–110; it reads VRWRWMCLLFSCSFLASWLLFGLAFWL. Topologically, residues 111-133 are extracellular; sequence IASLHGDLAAPPPPAPCFSHVAS. Residues 134–150 constitute an intramembrane region (helical; Pore-forming); sequence FLAAFLFALETQTSIGY. Residues 147–152 carry the Selectivity filter motif; sequence SIGYGV. Over 151–159 the chain is Extracellular; that stretch reads GVRSVTEEC. The helical transmembrane segment at 160-187 threads the bilayer; the sequence is PAAVAAVVLQCIAGCVLDAFVVGAVMAK. The Cytoplasmic segment spans residues 188–436; it reads MAKPKKRNET…TPTLALTLPP (249 aa). Positions 400-418 are enriched in acidic residues; that stretch reads QEEDEDDETEEGNGVETED. Residues 400–436 form a disordered region; that stretch reads QEEDEDDETEEGNGVETEDGAASPRVLTPTLALTLPP. Low complexity predominate over residues 426–436; the sequence is LTPTLALTLPP.

It belongs to the inward rectifier-type potassium channel (TC 1.A.2.1) family. KCNJ14 subfamily. As to expression, expressed preferentially in retina.

The protein resides in the membrane. It carries out the reaction K(+)(in) = K(+)(out). Channel activity is regulated by variations of cytosolic pH; channels are activated by alkaline and inhibited by acidic pH values. Inhibited by Ba(2+) and Cs(+) in a voltage-dependent manner; sensitivity to those inhibitors is lower than in other Kir channels. Functionally, inward rectifier potassium channels are characterized by a greater tendency to allow potassium to flow into the cell rather than out of it. Their voltage dependence is regulated by the concentration of extracellular potassium; as external potassium is raised, the voltage range of the channel opening shifts to more positive voltages. This chain is ATP-sensitive inward rectifier potassium channel 14 (KCNJ14), found in Homo sapiens (Human).